Here is a 389-residue protein sequence, read N- to C-terminus: Acetyl-CoA decarbonylase/synthase complex subunit delta (389 aa).

This sequence belongs to the CdhD family. Heterodimer of delta and gamma chains. The ACDS complex is made up of alpha, epsilon, beta, gamma and delta chains with a probable stoichiometry of (alpha(2)epsilon(2))(4)-beta(8)-(gamma(1)delta(1))(8).

Its function is as follows. Part of a complex that catalyzes the reversible cleavage of acetyl-CoA, allowing autotrophic growth from CO(2). Probably maintains the overall quaternary structure of the ACDS complex. The protein is Acetyl-CoA decarbonylase/synthase complex subunit delta of Methanothermobacter thermautotrophicus (strain ATCC 29096 / DSM 1053 / JCM 10044 / NBRC 100330 / Delta H) (Methanobacterium thermoautotrophicum).